Reading from the N-terminus, the 396-residue chain is Ribosomal RNA large subunit methyltransferase I (396 aa).

Residues 2 to 81 form the PUA domain; sequence TVSIYLAKGR…EAIDKDFFVR (80 aa).

It belongs to the methyltransferase superfamily. RlmI family.

The protein resides in the cytoplasm. It catalyses the reaction cytidine(1962) in 23S rRNA + S-adenosyl-L-methionine = 5-methylcytidine(1962) in 23S rRNA + S-adenosyl-L-homocysteine + H(+). Its function is as follows. Specifically methylates the cytosine at position 1962 (m5C1962) of 23S rRNA. This Aliivibrio fischeri (strain MJ11) (Vibrio fischeri) protein is Ribosomal RNA large subunit methyltransferase I.